Here is a 156-residue protein sequence, read N- to C-terminus: MTKKILGLDPGLASLGFGVICTESDNLELLDFGIIQTPAKTDIGKRLQIIYEDLHQVLNTHQPDVVAIEKLFFYRMGNTILVAQARGVVLLVLAQHQLPIIEYTPAQIKLALTGYGAADKVAVQEAVARELCLDCLPRPDDAADALAVALTAWFQR.

Active-site residues include aspartate 9, glutamate 69, and aspartate 141. Residues aspartate 9, glutamate 69, and aspartate 141 each contribute to the Mg(2+) site.

This sequence belongs to the RuvC family. Homodimer which binds Holliday junction (HJ) DNA. The HJ becomes 2-fold symmetrical on binding to RuvC with unstacked arms; it has a different conformation from HJ DNA in complex with RuvA. In the full resolvosome a probable DNA-RuvA(4)-RuvB(12)-RuvC(2) complex forms which resolves the HJ. The cofactor is Mg(2+).

It is found in the cytoplasm. The enzyme catalyses Endonucleolytic cleavage at a junction such as a reciprocal single-stranded crossover between two homologous DNA duplexes (Holliday junction).. The RuvA-RuvB-RuvC complex processes Holliday junction (HJ) DNA during genetic recombination and DNA repair. Endonuclease that resolves HJ intermediates. Cleaves cruciform DNA by making single-stranded nicks across the HJ at symmetrical positions within the homologous arms, yielding a 5'-phosphate and a 3'-hydroxyl group; requires a central core of homology in the junction. The consensus cleavage sequence is 5'-(A/T)TT(C/G)-3'. Cleavage occurs on the 3'-side of the TT dinucleotide at the point of strand exchange. HJ branch migration catalyzed by RuvA-RuvB allows RuvC to scan DNA until it finds its consensus sequence, where it cleaves and resolves the cruciform DNA. The sequence is that of Crossover junction endodeoxyribonuclease RuvC from Acaryochloris marina (strain MBIC 11017).